The sequence spans 44 residues: MRISLLAVILALLFVACHETKKQILQNEADSTPSEKTIWQPEQK.

The first 16 residues, 1–16 (MRISLLAVILALLFVA), serve as a signal peptide directing secretion.

This is an uncharacterized protein from Helicobacter pylori (strain ATCC 700392 / 26695) (Campylobacter pylori).